The following is a 447-amino-acid chain: NADH-ubiquinone oxidoreductase chain 4 (447 aa).

13 helical membrane passes run 28–48 (IFLATCLFMIKISSNYYFCDI), 56–76 (MISYGLILLSFWICGLMLMAS), 85–105 (YVNLFLFMIVFLLLMLIFTFS), 110–130 (FMFYLFFESSLIPTLFLILGW), 141–161 (IYLLFYTLLASLPLLIGIFYI), 183–203 (FLYLCMIFAFLVKMPMFLVHL), 213–233 (PVSGSMILAGVLLKLGGYGLL), 246–266 (FNYIWISISLIGGVLVSLICL), 273–293 (ALIAYSSVAHMGIVLSGLMTM), 301–321 (SYTLMIAHGLCSSGLFCLANI), 343–365 (SLSLWWFLLCSGNMAAPPTLNLL), 380–400 (LTMISLAFLSFFSAAYTLYLF), and 409–431 (YSGVYFFSSGTTREFLVLMLHWL).

This sequence belongs to the complex I subunit 4 family.

Its subcellular location is the mitochondrion membrane. The catalysed reaction is a ubiquinone + NADH + 5 H(+)(in) = a ubiquinol + NAD(+) + 4 H(+)(out). Its function is as follows. Core subunit of the mitochondrial membrane respiratory chain NADH dehydrogenase (Complex I) that is believed to belong to the minimal assembly required for catalysis. Complex I functions in the transfer of electrons from NADH to the respiratory chain. The immediate electron acceptor for the enzyme is believed to be ubiquinone. The protein is NADH-ubiquinone oxidoreductase chain 4 of Aedes aegypti (Yellowfever mosquito).